We begin with the raw amino-acid sequence, 583 residues long: Alpha-1,3-arabinosyltransferase XAT2 (583 aa).

Topologically, residues Met1–Arg21 are cytoplasmic. A helical; Signal-anchor for type II membrane protein transmembrane segment spans residues Leu22–Pro42. Topologically, residues Asp43–Gln583 are lumenal. The tract at residues Arg73–Asn178 is disordered. Basic and acidic residues-rich tracts occupy residues Thr102 to Glu121 and Glu135 to Thr146. The span at Ser149 to Thr160 shows a compositional bias: polar residues. The N-linked (GlcNAc...) asparagine glycan is linked to Asn158. Positions Arg162–Asn178 are enriched in basic and acidic residues. 4 N-linked (GlcNAc...) asparagine glycosylation sites follow: Asn229, Asn382, Asn450, and Asn485.

It belongs to the glycosyltransferase 61 family.

The protein localises to the golgi apparatus membrane. It participates in glycan metabolism. Functionally, glycosyltransferase involved in the arabinosylation of xylan, the major hemicellulose (non-cellulosic component) of primary and secondary walls of angiosperms. Possesses alpha-1,3-arabinosyltransferase activity, transferring an arabinofuranose residue to the xylan backbone. This chain is Alpha-1,3-arabinosyltransferase XAT2, found in Oryza sativa subsp. japonica (Rice).